The primary structure comprises 328 residues: Acyl-CoA wax alcohol acyltransferase 1 (328 aa).

2 helical membrane-spanning segments follow: residues serine 12–leucine 32 and valine 34–phenylalanine 53.

The protein belongs to the diacylglycerol acyltransferase family. As to expression, predominantly expressed in skin, where it is limited to the sebaceous gland. Expressed in more mature, centrally located cells just before their rupture and sebum release. Also expressed in all tissues except spleen. Expressed at higher level in thymus, prostate and testis.

The protein localises to the endoplasmic reticulum membrane. It carries out the reaction a long chain fatty alcohol + a fatty acyl-CoA = a wax ester + CoA. The enzyme catalyses 1,2-di-(9Z-octadecenoyl)-sn-glycerol + (9Z)-octadecenoyl-CoA = 1,2,3-tri-(9Z-octadecenoyl)-glycerol + CoA. The catalysed reaction is hexadecan-1-ol + (9Z)-octadecenoyl-CoA = hexadecanyl (9Z)-octadecenoate + CoA. It catalyses the reaction decan-1-ol + (9Z)-octadecenoyl-CoA = 1-O-decyl-(9Z)-octadecenoate + CoA. It carries out the reaction (9Z)-hexadecen-1-ol + (9Z)-octadecenoyl-CoA = 1-O-(9Z)-hexadecenyl (9Z)-octadecenoate + CoA. The enzyme catalyses octadecan-1-ol + (9Z)-octadecenoyl-CoA = 1-O-octadecyl (9Z)-octadecenoate + CoA. The catalysed reaction is (9Z)-octadecen-1-ol + (9Z)-octadecenoyl-CoA = 1-O-(9Z)-octadecenyl (9Z)-octadecenoate + CoA. It catalyses the reaction hexadecan-1-ol + hexadecanoyl-CoA = hexadecanyl hexadecanoate + CoA. It carries out the reaction hexadecan-1-ol + (9Z)-hexadecenoyl-CoA = 1-O-hexadecyl (9Z)-hexadecenoate + CoA. The enzyme catalyses hexadecan-1-ol + octadecanoyl-CoA = hexadecanyl octadecanoate + CoA. The catalysed reaction is eicosan-1-ol + (9Z)-octadecenoyl-CoA = 1-O-eicosanyl (9Z)-octadecenoate + CoA. Its function is as follows. Acyltransferase that catalyzes the formation of ester bonds between fatty alcohols and fatty acyl-CoAs to form wax monoesters. Shows a strong preference for decyl alcohol (C10), with less activity towards C16 and C18 alcohols. Shows a strong preference for saturated acyl-CoAs. The polypeptide is Acyl-CoA wax alcohol acyltransferase 1 (AWAT1) (Homo sapiens (Human)).